Reading from the N-terminus, the 139-residue chain is Heavy metal-associated isoprenylated plant protein 13 (139 aa).

The region spanning 3–70 (PMKAVLQLSI…LCNTELVSVE (68 aa)) is the HMA domain. The segment at 70 to 94 (EVVKPPEKKPEPEKPAPPKPAPAPA) is disordered. The span at 73–85 (KPPEKKPEPEKPA) shows a compositional bias: basic and acidic residues. Position 136 is a cysteine methyl ester (Cys-136). Residue Cys-136 is the site of S-farnesyl cysteine attachment. A propeptide spans 137–139 (VIM) (removed in mature form).

It belongs to the HIPP family.

Functionally, probable heavy-metal-binding protein. This is Heavy metal-associated isoprenylated plant protein 13 from Arabidopsis thaliana (Mouse-ear cress).